The following is a 449-amino-acid chain: Allantoinase (449 aa).

The Zn(2+) site is built by histidine 61, histidine 63, lysine 148, histidine 184, histidine 240, and aspartate 313. Lysine 148 bears the N6-carboxylysine mark.

It belongs to the metallo-dependent hydrolases superfamily. Allantoinase family. In terms of assembly, homotetramer. Requires Zn(2+) as cofactor. Post-translationally, carboxylation allows a single lysine to coordinate two zinc ions.

The catalysed reaction is (S)-allantoin + H2O = allantoate + H(+). Its pathway is nitrogen metabolism; (S)-allantoin degradation; allantoate from (S)-allantoin: step 1/1. Catalyzes the conversion of allantoin (5-ureidohydantoin) to allantoic acid by hydrolytic cleavage of the five-member hydantoin ring. The chain is Allantoinase from Desulfitobacterium hafniense (strain Y51).